The following is a 685-amino-acid chain: Eukaryotic peptide chain release factor GTP-binding subunit (685 aa).

Disordered stretches follow at residues 1-34, 63-99, and 112-234; these read MSDS…GYQA, YNPD…GGRG, and GYQA…NVTS. Residue Ser2 is modified to N-acetylserine. Residues 2–239 are interaction with PAB1; that stretch reads SDSNQGNNQQ…ANVTSADALI (238 aa). The segment at 5-135 is prion domain (PrD); the sequence is NQGNNQQNYQ…LNDFQKQQKQ (131 aa). Over residues 117-129 the composition is skewed to polar residues; the sequence is FQPQSQGMSLNDF. The charged stretch occupies residues 139-249; that stretch reads KPKKTLKLVS…KEQEEEVDDE (111 aa). Over residues 166–222 the composition is skewed to basic and acidic residues; the sequence is AESDKKEEEKSAETKEPTKEPTKVEEPVKKEEKPVQTEEKTEEKSELPKVEDLKISE. Over residues 223–234 the composition is skewed to polar residues; sequence STHNTNNANVTS. One can recognise a tr-type G domain in the interval 258-484; sequence KDHVSLIFMG…YLDTMNHVDR (227 aa). The tract at residues 267–274 is G1; it reads GHVDAGKS. Residue 267 to 274 participates in GTP binding; the sequence is GHVDAGKS. A G2 region spans residues 323 to 327; it reads GKTIE. Residues 344–347 are G3; the sequence is DAPG. Residues 406 to 409 and 449 to 450 each bind GTP; these read NKMD and GY. A G4 region spans residues 406–409; it reads NKMD. Residues 448–450 form a G5 region; it reads SGY. Ser571 is modified (phosphoserine).

This sequence belongs to the TRAFAC class translation factor GTPase superfamily. Classic translation factor GTPase family. ERF3 subfamily. In terms of assembly, heterodimer of two subunits, one of which binds GTP. Interacts with polyadenylate-binding protein PAB1, and TPA1.

The protein resides in the cytoplasm. It catalyses the reaction GTP + H2O = GDP + phosphate + H(+). Functionally, GTPase component of the eRF1-eRF3-GTP ternary complex, a ternary complex that mediates translation termination in response to the termination codons UAA, UAG and UGA. SUP35/eRF3 mediates SUP45/eRF1 delivery to stop codons: The eRF1-eRF3-GTP complex binds to a stop codon in the ribosomal A-site. GTP hydrolysis by SUP35/eRF3 induces a conformational change that leads to its dissociation, permitting SUP45/eRF1 to accommodate fully in the A-site. Recruited by polyadenylate-binding protein PAB1 to poly(A)-tails of mRNAs. Interaction with PAB1 is also required for regulation of normal mRNA decay through translation termination-coupled poly(A) shortening. This is Eukaryotic peptide chain release factor GTP-binding subunit (SUP35) from Saccharomyces cerevisiae (strain ATCC 204508 / S288c) (Baker's yeast).